The sequence spans 214 residues: Hypoxanthine-guanine phosphoribosyltransferase (214 aa).

At Ala2 the chain carries N-acetylalanine. Lys69 is a GMP binding site. Lys103 carries the N6-acetyllysine modification. Lys115 is covalently cross-linked (Glycyl lysine isopeptide (Lys-Gly) (interchain with G-Cter in SUMO1); alternate). A Glycyl lysine isopeptide (Lys-Gly) (interchain with G-Cter in SUMO2); alternate cross-link involves residue Lys115. Residues 134-142 (EDIIDTGKT), Lys166, 186-188 (KFV), and Asp194 contribute to the GMP site. The active-site Proton acceptor is the Asp138. The residue at position 142 (Thr142) is a Phosphothreonine. A Mg(2+)-binding site is contributed by Asp194.

It belongs to the purine/pyrimidine phosphoribosyltransferase family. In terms of assembly, homotetramer. It depends on Mg(2+) as a cofactor.

It is found in the cytoplasm. The enzyme catalyses IMP + diphosphate = hypoxanthine + 5-phospho-alpha-D-ribose 1-diphosphate. It catalyses the reaction GMP + diphosphate = guanine + 5-phospho-alpha-D-ribose 1-diphosphate. It functions in the pathway purine metabolism; IMP biosynthesis via salvage pathway; IMP from hypoxanthine: step 1/1. In terms of biological role, converts guanine to guanosine monophosphate, and hypoxanthine to inosine monophosphate. Transfers the 5-phosphoribosyl group from 5-phosphoribosylpyrophosphate onto the purine. Plays a central role in the generation of purine nucleotides through the purine salvage pathway. This chain is Hypoxanthine-guanine phosphoribosyltransferase (Hprt1), found in Mus spretus (Western Mediterranean mouse).